Here is a 326-residue protein sequence, read N- to C-terminus: Putative replication protein B (326 aa).

It belongs to the ParB family.

In Sinorhizobium fredii (strain NBRC 101917 / NGR234), this protein is Putative replication protein B.